Consider the following 132-residue polypeptide: L-ectoine synthase (132 aa).

It belongs to the ectoine synthase family.

The catalysed reaction is (2S)-4-acetamido-2-aminobutanoate = L-ectoine + H2O. It functions in the pathway amine and polyamine biosynthesis; ectoine biosynthesis; L-ectoine from L-aspartate 4-semialdehyde: step 3/3. Its function is as follows. Catalyzes the circularization of gamma-N-acetyl-alpha,gamma-diaminobutyric acid (ADABA) to ectoine (1,4,5,6-tetrahydro-2-methyl-4-pyrimidine carboxylic acid), which is an excellent osmoprotectant. The polypeptide is L-ectoine synthase (Saccharophagus degradans (strain 2-40 / ATCC 43961 / DSM 17024)).